A 286-amino-acid chain; its full sequence is ATP synthase gamma chain (286 aa).

The protein belongs to the ATPase gamma chain family. F-type ATPases have 2 components, CF(1) - the catalytic core - and CF(0) - the membrane proton channel. CF(1) has five subunits: alpha(3), beta(3), gamma(1), delta(1), epsilon(1). CF(0) has three main subunits: a, b and c.

It localises to the cell inner membrane. In terms of biological role, produces ATP from ADP in the presence of a proton gradient across the membrane. The gamma chain is believed to be important in regulating ATPase activity and the flow of protons through the CF(0) complex. The protein is ATP synthase gamma chain of Shewanella halifaxensis (strain HAW-EB4).